The sequence spans 96 residues: Protein C4 (96 aa).

Gly-2 carries the N-myristoyl glycine; by host lipid modification. The disordered stretch occupies residues 66-96 (STDDLQGEDSRQPMTLTPRQLTQEVSRRLLM). Residues 77–89 (QPMTLTPRQLTQE) are compositionally biased toward polar residues.

It belongs to the geminiviridae protein AC4/C4 family.

Its subcellular location is the host cell membrane. Pathogenicity determinant. May act as a suppressor of RNA-mediated gene silencing, also known as post-transcriptional gene silencing (PTGS), a mechanism of plant viral defense that limits the accumulation of viral RNAs. The chain is Protein C4 from Cynanchum acutum (Tomato).